The following is a 219-amino-acid chain: Probable transcriptional regulator flp (219 aa).

One can recognise an HTH crp-type domain in the interval 144-212 (DSINVRLTHY…GKQVRILNAE (69 aa)). Positions 191 to 210 (KRLAEEKLIERSGKQVRILN) form a DNA-binding region, H-T-H motif.

The polypeptide is Probable transcriptional regulator flp (flp) (Lacticaseibacillus casei (Lactobacillus casei)).